We begin with the raw amino-acid sequence, 271 residues long: Putative phosphoenolpyruvate synthase regulatory protein (271 aa).

Position 152-159 (152-159) interacts with ADP; sequence GVSRCGKT.

It belongs to the pyruvate, phosphate/water dikinase regulatory protein family. PSRP subfamily.

The catalysed reaction is [pyruvate, water dikinase] + ADP = [pyruvate, water dikinase]-phosphate + AMP + H(+). It carries out the reaction [pyruvate, water dikinase]-phosphate + phosphate + H(+) = [pyruvate, water dikinase] + diphosphate. In terms of biological role, bifunctional serine/threonine kinase and phosphorylase involved in the regulation of the phosphoenolpyruvate synthase (PEPS) by catalyzing its phosphorylation/dephosphorylation. This chain is Putative phosphoenolpyruvate synthase regulatory protein, found in Legionella pneumophila (strain Corby).